A 332-amino-acid chain; its full sequence is DNA double-strand break repair nuclease NurA (332 aa).

Mn(2+)-binding residues include D57 and D132.

The protein belongs to the NurA family. Mn(2+) serves as cofactor.

Involved in DNA double-strand break (DSB) repair. Probably acts with HerA to stimulate resection of the 5' strand and produce the long 3' single-strand that is required for RadA loading. Exhibits both single-stranded endonuclease activity and 5'-3' exonuclease activity on single-stranded and double-stranded DNA. The chain is DNA double-strand break repair nuclease NurA from Sulfolobus acidocaldarius (strain ATCC 33909 / DSM 639 / JCM 8929 / NBRC 15157 / NCIMB 11770).